The following is a 59-amino-acid chain: Large ribosomal subunit protein bL32 (59 aa).

Belongs to the bacterial ribosomal protein bL32 family.

This Lactiplantibacillus plantarum (strain ATCC BAA-793 / NCIMB 8826 / WCFS1) (Lactobacillus plantarum) protein is Large ribosomal subunit protein bL32.